The primary structure comprises 169 residues: Large ribosomal subunit protein uL10 (169 aa).

The protein belongs to the universal ribosomal protein uL10 family. In terms of assembly, part of the ribosomal stalk of the 50S ribosomal subunit. The N-terminus interacts with L11 and the large rRNA to form the base of the stalk. The C-terminus forms an elongated spine to which L12 dimers bind in a sequential fashion forming a multimeric L10(L12)X complex.

Its function is as follows. Forms part of the ribosomal stalk, playing a central role in the interaction of the ribosome with GTP-bound translation factors. The chain is Large ribosomal subunit protein uL10 from Onion yellows phytoplasma (strain OY-M).